A 146-amino-acid polypeptide reads, in one-letter code: D-aminoacyl-tRNA deacylase (146 aa).

A Gly-cisPro motif, important for rejection of L-amino acids motif is present at residues G137–P138.

This sequence belongs to the DTD family. In terms of assembly, homodimer.

It localises to the cytoplasm. The catalysed reaction is glycyl-tRNA(Ala) + H2O = tRNA(Ala) + glycine + H(+). It carries out the reaction a D-aminoacyl-tRNA + H2O = a tRNA + a D-alpha-amino acid + H(+). In terms of biological role, an aminoacyl-tRNA editing enzyme that deacylates mischarged D-aminoacyl-tRNAs. Also deacylates mischarged glycyl-tRNA(Ala), protecting cells against glycine mischarging by AlaRS. Acts via tRNA-based rather than protein-based catalysis; rejects L-amino acids rather than detecting D-amino acids in the active site. By recycling D-aminoacyl-tRNA to D-amino acids and free tRNA molecules, this enzyme counteracts the toxicity associated with the formation of D-aminoacyl-tRNA entities in vivo and helps enforce protein L-homochirality. The sequence is that of D-aminoacyl-tRNA deacylase from Bacillus thuringiensis (strain Al Hakam).